Consider the following 413-residue polypeptide: Putative syntaxin-5 (413 aa).

At 1–391 the chain is on the cytoplasmic side; it reads MSDFHNIRSR…RYLQNISKNR (391 aa). Residues 257 to 290 are disordered; sequence KNRRDKFSSGAAVPMGLPSSSSGANVRSKLLQDD. The t-SNARE coiled-coil homology domain maps to 321–383; it reads LEYAQARSNT…DMAHSELVRY (63 aa). Residues 392 to 412 traverse the membrane as a helical; Anchor for type IV membrane protein segment; it reads WLMIQVFGVLMVFFVVFVLFL. Residue T413 is a topological domain, extracellular.

The protein belongs to the syntaxin family.

The protein resides in the membrane. In terms of biological role, potentially involved in docking of synaptic vesicles at presynaptic active zones. The sequence is that of Putative syntaxin-5 (syx-5) from Caenorhabditis elegans.